Consider the following 151-residue polypeptide: Globin CTT-X (151 aa).

The 145-residue stretch at 6–150 folds into the Globin domain; that stretch reads TLDAHEVEQV…AFSVIFEVLE (145 aa). H64 and H99 together coordinate heme b.

This sequence belongs to the globin family. As to quaternary structure, homodimer.

The protein is Globin CTT-X (CTT-10) of Chironomus thummi thummi (Midge).